Here is a 308-residue protein sequence, read N- to C-terminus: Ribosomal RNA large subunit methyltransferase F (308 aa).

It belongs to the methyltransferase superfamily. METTL16/RlmF family.

It localises to the cytoplasm. The enzyme catalyses adenosine(1618) in 23S rRNA + S-adenosyl-L-methionine = N(6)-methyladenosine(1618) in 23S rRNA + S-adenosyl-L-homocysteine + H(+). Specifically methylates the adenine in position 1618 of 23S rRNA. This is Ribosomal RNA large subunit methyltransferase F from Escherichia coli (strain K12 / MC4100 / BW2952).